A 291-amino-acid polypeptide reads, in one-letter code: Small ribosomal subunit biogenesis GTPase RsgA (291 aa).

Positions asparagine 63–leucine 221 constitute a CP-type G domain. GTP-binding positions include threonine 112–aspartate 115 and glycine 164–threonine 172. Residues cysteine 245, cysteine 250, histidine 252, and cysteine 258 each contribute to the Zn(2+) site.

Belongs to the TRAFAC class YlqF/YawG GTPase family. RsgA subfamily. In terms of assembly, monomer. Associates with 30S ribosomal subunit, binds 16S rRNA. Zn(2+) is required as a cofactor.

The protein resides in the cytoplasm. In terms of biological role, one of several proteins that assist in the late maturation steps of the functional core of the 30S ribosomal subunit. Helps release RbfA from mature subunits. May play a role in the assembly of ribosomal proteins into the subunit. Circularly permuted GTPase that catalyzes slow GTP hydrolysis, GTPase activity is stimulated by the 30S ribosomal subunit. The sequence is that of Small ribosomal subunit biogenesis GTPase RsgA from Staphylococcus epidermidis (strain ATCC 12228 / FDA PCI 1200).